Reading from the N-terminus, the 108-residue chain is ATP synthase subunit H, mitochondrial (108 aa).

The transit peptide at 1 to 19 (MFTLRAASRRAFSTSIARR) directs the protein to the mitochondrion. Disordered regions lie at residues 40–60 (AKDAEGQVKPWSAPSAPKPPV) and 75–108 (APVDVEGQTNSKSASPQANDEDWLAFEEEEGVAV). Residues 47–60 (VKPWSAPSAPKPPV) show a composition bias toward low complexity. Polar residues predominate over residues 81-92 (GQTNSKSASPQA). The span at 93 to 108 (NDEDWLAFEEEEGVAV) shows a compositional bias: acidic residues.

As to quaternary structure, F-type ATP synthases have 2 components, the catalytic core F(1) and the membrane-embedded component F(0), linked together by a central stalk and a peripheral stalk. The central stalk, also called rotor shaft, is often seen as part of F(1). The peripheral stalk is seen as part of F(0). F(0) contains the membrane channel next to the rotor. F-type ATP synthases form dimers but each monomer functions independently in ATP generation. The dimer consists of 17 different polypeptides: ATP1 (subunit alpha, 3 molecules per monomer, part of F(1)), ATP2 (subunit beta, 3 copies per monomer, part of F(1)), ATP3 (subunit gamma, part of the central stalk), ATP4 (subunit b, part of the peripheral stalk), ATP5/OSCP (subunit 5/OSCP, part of the peripheral stalk), ATP6 (subunit a, part of the peripheral stalk), ATP7 (subunit d, part of the peripheral stalk), ATP8 (subunit 8, part of the peripheral stalk), OLI1 (subunit c, part of the rotor, 10 molecules per monomer), ATP14 (subunit H, part of the peripheral stalk), ATP15 (subunit epsilon, part of the central stalk), ATP16 (subunit delta, part of the central stalk), ATP17 (subunit f, part of the peripheral stalk), ATP18 (subunit i/j, part of the peripheral stalk), ATP19 (subunit k, dimer-specific, at interface between monomers), ATP20 (subunit g, at interface between monomers), TIM11 (subunit e, at interface between monomers).

Its subcellular location is the mitochondrion inner membrane. Functionally, mitochondrial membrane ATP synthase (F(1)F(0) ATP synthase or Complex V) produces ATP from ADP in the presence of a proton gradient across the membrane which is generated by electron transport complexes of the respiratory chain. F-type ATP synthases consist of two structural domains, F(1) - containing the extramembraneous catalytic core, and F(0) - containing the membrane proton channel, linked together by a central stalk and a peripheral stalk. During catalysis, ATP synthesis in the catalytic domain of F(1) is coupled via a rotary mechanism of the central stalk subunits to proton translocation. Part of the peripheral stalk. The sequence is that of ATP synthase subunit H, mitochondrial from Yarrowia lipolytica (strain CLIB 122 / E 150) (Yeast).